Here is a 262-residue protein sequence, read N- to C-terminus: Plant intracellular Ras-group-related LRR protein 7 (262 aa).

LRR repeat units follow at residues Trp19–Val42, Gly43–Leu66, Asn68–Leu89, Arg90–Leu112, Ser113–Leu135, Asn137–Cys158, Ser159–Leu181, Val182–Asp204, and Lys206–Glu231.

It belongs to the SHOC2 family. Widely expressed and preferentially in leaf sheathes.

Its function is as follows. Leucine-rich repeat protein that likely mediates protein interactions, possibly in the context of signal transduction. The chain is Plant intracellular Ras-group-related LRR protein 7 (IRL7) from Oryza sativa subsp. japonica (Rice).